The primary structure comprises 585 residues: Arginine--tRNA ligase (585 aa).

Residues 126-136 (PNIAKEMHVGH) carry the 'HIGH' region motif.

It belongs to the class-I aminoacyl-tRNA synthetase family. As to quaternary structure, monomer.

It is found in the cytoplasm. The catalysed reaction is tRNA(Arg) + L-arginine + ATP = L-arginyl-tRNA(Arg) + AMP + diphosphate. The protein is Arginine--tRNA ligase of Cyanothece sp. (strain PCC 7425 / ATCC 29141).